A 125-amino-acid polypeptide reads, in one-letter code: Small ribosomal subunit protein uS12 (125 aa).

The disordered stretch occupies residues 1-23 (MATVNQLVRKGRTKRTAKSSVPA). D89 is modified (3-methylthioaspartic acid). Residues 102-125 (ADTAGVDKRRQGRSKYGAKRPKKK) form a disordered region. Over residues 111–125 (RQGRSKYGAKRPKKK) the composition is skewed to basic residues.

The protein belongs to the universal ribosomal protein uS12 family. As to quaternary structure, part of the 30S ribosomal subunit. Contacts proteins S8 and S17. May interact with IF1 in the 30S initiation complex.

Functionally, with S4 and S5 plays an important role in translational accuracy. Its function is as follows. Interacts with and stabilizes bases of the 16S rRNA that are involved in tRNA selection in the A site and with the mRNA backbone. Located at the interface of the 30S and 50S subunits, it traverses the body of the 30S subunit contacting proteins on the other side and probably holding the rRNA structure together. The combined cluster of proteins S8, S12 and S17 appears to hold together the shoulder and platform of the 30S subunit. In Halorhodospira halophila (strain DSM 244 / SL1) (Ectothiorhodospira halophila (strain DSM 244 / SL1)), this protein is Small ribosomal subunit protein uS12.